Reading from the N-terminus, the 370-residue chain is MKLCATSSEPARAAWPLSEPALAYFPDARSASDRDLAAGAYSPGVAMEHIPVLLDRCVELLTPALTRRNPDGRGAVLVDATLGAGGHAHRFLSDLPGLHLIGLDRDPQALQIAGERLAPFGDRVSLVRTRYDGIDDALAQTGVAEVSGFLFDLGVSSMQLDRTERGFSYSADAPLDMRMDSDAPLTAADVVNTFAEKDITRILREFGEERFAARIAKHIVRRRPLNTTGELVELLYDAIPAPARRTGGHPAKRTFQALRIAVNSELDSLRAAVPAALAALETGGRIVVMAYQSLEDRIVKTEFAAATASRTPPGLPVELPGHEPEFVALTRGAERATPEEIERNPRSAPVRLRALEKVAGRPTTARRDAR.

Residues 85–87 (GGH), Asp-104, Tyr-131, Asp-152, and Gln-159 each bind S-adenosyl-L-methionine. 2 stretches are compositionally biased toward basic and acidic residues: residues 332-345 (GAERATPEEIERNP) and 353-370 (RALEKVAGRPTTARRDAR). The segment at 332-370 (GAERATPEEIERNPRSAPVRLRALEKVAGRPTTARRDAR) is disordered.

It belongs to the methyltransferase superfamily. RsmH family.

The protein resides in the cytoplasm. It carries out the reaction cytidine(1402) in 16S rRNA + S-adenosyl-L-methionine = N(4)-methylcytidine(1402) in 16S rRNA + S-adenosyl-L-homocysteine + H(+). Functionally, specifically methylates the N4 position of cytidine in position 1402 (C1402) of 16S rRNA. In Mycobacterium sp. (strain KMS), this protein is Ribosomal RNA small subunit methyltransferase H.